A 439-amino-acid polypeptide reads, in one-letter code: MKIYDFVSKTDKEVSLDKKNIKMYVCGPTVYNHVHIGNLRPIITFDVLNRLFLELGYNVTFIHNITDIDDKIVNKAKEENIGELELSSYYETQYFDILKTINIHTSNMKFPRVSDHIKDIENYIQKIVNNKFAYLVDGDVYFDTTKSNQYGKISNKKLDELLVGDKSEDNLKKNNPQDFALWKQTTIGLNWDLKFSTGRPGWHTECSCLINKYLGDQIDIHGGGIDLKFPHHENENIQNIAVNNKDLARIWMHVGHLNINNQKMSKSLSNFILAKDLLSEYNTNTVRWFFYQTSYSNPLNFTTENLINSKNQLENIIYNLNIFKSHLIIEQKYNEKNLEFDKSNLIELTNNFNLPNIVSFIEEKIKYSSILLRNKNFEELNKLHFNLSYLLTKILGIIHVNLFDDEAIELLNKWNKLKQEKNFSESDKYRKLLMEKKLL.

Cys26 contacts Zn(2+). Positions 28-38 (PTVYNHVHIGN) match the 'HIGH' region motif. Zn(2+) is bound by residues Cys206, His231, and Glu235. A 'KMSKS' region motif is present at residues 263 to 267 (KMSKS). An ATP-binding site is contributed by Lys266.

Belongs to the class-I aminoacyl-tRNA synthetase family. As to quaternary structure, monomer. The cofactor is Zn(2+).

The protein resides in the cytoplasm. It carries out the reaction tRNA(Cys) + L-cysteine + ATP = L-cysteinyl-tRNA(Cys) + AMP + diphosphate. This chain is Cysteine--tRNA ligase, found in Malacoplasma penetrans (strain HF-2) (Mycoplasma penetrans).